The chain runs to 365 residues: Homeobox protein Nkx-6.1 (365 aa).

The interval 35 to 136 (LYPAAYPPLP…SSSSASATSA (102 aa)) is disordered. Low complexity-rich tracts occupy residues 48–59 (PSSSSSSSSSSS), 69–92 (PGGL…QLSA), and 110–136 (ASGA…ATSA). The tract at residues 102–269 (LSRPSMPVAS…KYLAGPERAR (168 aa)) is repressor domain. R190 carries the asymmetric dimethylarginine modification. A DNA-binding region (homeobox) is located at residues 237-296 (RKHTRPTFSGQQIFALEKTFEQTKYLAGPERARLAYSLGMTESQVKVWFQNRRTKWRKKH). The tract at residues 295 to 365 (KHAAEMATAK…LHASEAEGSS (71 aa)) is disordered. Over residues 305–318 (KKQDSETERLKGTS) the composition is skewed to basic and acidic residues. The tract at residues 307-365 (QDSETERLKGTSENEEDDDDYNKPLDPNSDDEKITQLLKKHKSSGGSLLLHASEAEGSS) is involved in DNA-binding.

Pancreatic beta cells.

It localises to the nucleus. Functionally, transcription factor which binds to specific A/T-rich DNA sequences in the promoter regions of a number of genes. Involved in the development of insulin-producing beta cells in the islets of Langerhans at the secondary transition. Together with NKX2-2 and IRX3 acts to restrict the generation of motor neurons to the appropriate region of the neural tube. Belongs to the class II proteins of neuronal progenitor factors, which are induced by SHH signals. The sequence is that of Homeobox protein Nkx-6.1 (Nkx6-1) from Rattus norvegicus (Rat).